The chain runs to 333 residues: Acetyltransferase Pat (333 aa).

3',5'-cyclic AMP is bound by residues 88–91 (GEIA), 98–99 (RS), and Arg-138. Residues 156-318 (LMLRPVLPGD…GELSLGREMV (163 aa)) enclose the N-acetyltransferase domain. Residue His-173 coordinates substrate. Asp-214 is a binding site for Mg(2+). Residues 238 to 240 (FTV), 246 to 251 (GRGIGS), Asn-277, and Arg-286 contribute to the substrate site.

Homodimer. Mg(2+) is required as a cofactor.

Its activity is regulated as follows. Autoinhibited and allosterically activated by 3,5-cyclic adenosine monophosphate (cAMP). An extensive conformational rearrangement relieves this autoinhibition by means of a substrate-mimicking lid that covers the protein-substrate binding surface. Catalyzes specifically the acetylation of the epsilon-amino group of a highly conserved lysine residue in acetyl-CoA synthetase (ACS). This acetylation results in the inactivation of ACS activity and could be important for mycobacteria to adjust to environmental changes. The sequence is that of Acetyltransferase Pat from Mycobacterium tuberculosis (strain ATCC 25618 / H37Rv).